The primary structure comprises 281 residues: sn-glycerol-3-phosphate transport system permease protein UgpE (281 aa).

6 helical membrane-spanning segments follow: residues leucine 16–leucine 36, phenylalanine 85–phenylalanine 105, phenylalanine 113–valine 133, leucine 142–phenylalanine 162, alanine 202–isoleucine 222, and tryptophan 247–alanine 267. In terms of domain architecture, ABC transmembrane type-1 spans methionine 77–methionine 268.

It belongs to the binding-protein-dependent transport system permease family. UgpAE subfamily. The complex is composed of two ATP-binding proteins (UgpC), two transmembrane proteins (UgpA and UgpE) and a solute-binding protein (UgpB).

It localises to the cell inner membrane. In terms of biological role, part of the ABC transporter complex UgpBAEC involved in sn-glycerol-3-phosphate (G3P) import. Probably responsible for the translocation of the substrate across the membrane. This chain is sn-glycerol-3-phosphate transport system permease protein UgpE (ugpE), found in Salmonella choleraesuis (strain SC-B67).